We begin with the raw amino-acid sequence, 32 residues long: Phallacidin proprotein (32 aa).

The propeptide occupies 1–10 (MSDINATRLP). The segment at residues 11 to 17 (AWLVDCP) is a cross-link (cyclopeptide (Ala-Pro)). Residues 12-16 (WLVDC) constitute a cross-link (2'-cysteinyl-6'-hydroxytryptophan sulfoxide (Trp-Cys)). A propeptide spanning residues 18 to 32 (CVGDDINRLLTRGEK) is cleaved from the precursor.

This sequence belongs to the MSDIN fungal toxin family. Processed by the macrocyclase-peptidase enzyme POPB to yield a toxic cyclic heptapeptide. POPB first removes 10 residues from the N-terminus. Conformational trapping of the remaining peptide forces the enzyme to release this intermediate rather than proceed to macrocyclization. The enzyme rebinds the remaining peptide in a different conformation and catalyzes macrocyclization of the N-terminal 7 residues.

In terms of biological role, major toxin that belongs to the bicyclic heptapeptides called phallotoxins. Although structurally related to amatoxins, phallotoxins have a different mode of action, which is the stabilization of F-actin. Phallotoxins are poisonous when administered parenterally, but not orally because of poor absorption. This Amanita pallidorosea protein is Phallacidin proprotein.